Consider the following 171-residue polypeptide: 3-hydroxydecanoyl-[acyl-carrier-protein] dehydratase (171 aa).

The active site involves His70.

The protein belongs to the thioester dehydratase family. FabA subfamily. In terms of assembly, homodimer.

The protein localises to the cytoplasm. It carries out the reaction a (3R)-hydroxyacyl-[ACP] = a (2E)-enoyl-[ACP] + H2O. The catalysed reaction is (3R)-hydroxydecanoyl-[ACP] = (2E)-decenoyl-[ACP] + H2O. It catalyses the reaction (2E)-decenoyl-[ACP] = (3Z)-decenoyl-[ACP]. It participates in lipid metabolism; fatty acid biosynthesis. Functionally, necessary for the introduction of cis unsaturation into fatty acids. Catalyzes the dehydration of (3R)-3-hydroxydecanoyl-ACP to E-(2)-decenoyl-ACP and then its isomerization to Z-(3)-decenoyl-ACP. Can catalyze the dehydratase reaction for beta-hydroxyacyl-ACPs with saturated chain lengths up to 16:0, being most active on intermediate chain length. This is 3-hydroxydecanoyl-[acyl-carrier-protein] dehydratase from Shewanella sp. (strain ANA-3).